The chain runs to 286 residues: ATP synthase gamma chain (286 aa).

Belongs to the ATPase gamma chain family. In terms of assembly, F-type ATPases have 2 components, CF(1) - the catalytic core - and CF(0) - the membrane proton channel. CF(1) has five subunits: alpha(3), beta(3), gamma(1), delta(1), epsilon(1). CF(0) has three main subunits: a, b and c.

It localises to the cell membrane. In terms of biological role, produces ATP from ADP in the presence of a proton gradient across the membrane. The gamma chain is believed to be important in regulating ATPase activity and the flow of protons through the CF(0) complex. This is ATP synthase gamma chain from Bacillus cereus (strain G9842).